A 145-amino-acid chain; its full sequence is Transcription antitermination protein NusB (145 aa).

This sequence belongs to the NusB family.

In terms of biological role, involved in transcription antitermination. Required for transcription of ribosomal RNA (rRNA) genes. Binds specifically to the boxA antiterminator sequence of the ribosomal RNA (rrn) operons. The chain is Transcription antitermination protein NusB from Citrifermentans bemidjiense (strain ATCC BAA-1014 / DSM 16622 / JCM 12645 / Bem) (Geobacter bemidjiensis).